We begin with the raw amino-acid sequence, 340 residues long: DNA-directed RNA polymerase subunit alpha (340 aa).

Residues 1 to 236 (MLSLSKNWNT…EQLQLFISFE (236 aa)) form an alpha N-terminal domain (alpha-NTD) region. Positions 251–340 (FSPYLLKRVD…LSKRYEDSYN (90 aa)) are alpha C-terminal domain (alpha-CTD).

Belongs to the RNA polymerase alpha chain family. In terms of assembly, homodimer. The RNAP catalytic core consists of 2 alpha, 1 beta, 1 beta' and 1 omega subunit. When a sigma factor is associated with the core the holoenzyme is formed, which can initiate transcription.

The enzyme catalyses RNA(n) + a ribonucleoside 5'-triphosphate = RNA(n+1) + diphosphate. Its function is as follows. DNA-dependent RNA polymerase catalyzes the transcription of DNA into RNA using the four ribonucleoside triphosphates as substrates. The chain is DNA-directed RNA polymerase subunit alpha from Rickettsia rickettsii (strain Iowa).